The sequence spans 346 residues: Ribosomal RNA small subunit methyltransferase H (346 aa).

S-adenosyl-L-methionine contacts are provided by residues 47-49 (GGY), aspartate 65, phenylalanine 92, aspartate 113, and glutamine 120. The span at 270-279 (RGEAPSRRLP) shows a compositional bias: basic and acidic residues. A disordered region spans residues 270-346 (RGEAPSRRLP…ALPQRAAKGR (77 aa)).

It belongs to the methyltransferase superfamily. RsmH family.

It localises to the cytoplasm. The enzyme catalyses cytidine(1402) in 16S rRNA + S-adenosyl-L-methionine = N(4)-methylcytidine(1402) in 16S rRNA + S-adenosyl-L-homocysteine + H(+). In terms of biological role, specifically methylates the N4 position of cytidine in position 1402 (C1402) of 16S rRNA. The chain is Ribosomal RNA small subunit methyltransferase H from Methylocella silvestris (strain DSM 15510 / CIP 108128 / LMG 27833 / NCIMB 13906 / BL2).